Here is a 316-residue protein sequence, read N- to C-terminus: Acetaldehyde dehydrogenase (316 aa).

11-14 (SGNI) is a binding site for NAD(+). The active-site Acyl-thioester intermediate is the Cys-131. Residues 162-170 (SAGPGTRAN) and Asn-289 contribute to the NAD(+) site.

The protein belongs to the acetaldehyde dehydrogenase family. In terms of assembly, interacts with MhpE.

The catalysed reaction is acetaldehyde + NAD(+) + CoA = acetyl-CoA + NADH + H(+). It participates in aromatic compound metabolism; 3-phenylpropanoate degradation. Functionally, catalyzes the conversion of acetaldehyde to acetyl-CoA, using NAD(+) and coenzyme A. Is the final enzyme in the meta-cleavage pathway for the degradation of aromatic compounds. In Escherichia coli O7:K1 (strain IAI39 / ExPEC), this protein is Acetaldehyde dehydrogenase.